A 424-amino-acid polypeptide reads, in one-letter code: Enolase (424 aa).

Glutamine 162 serves as a coordination point for (2R)-2-phosphoglycerate. The Proton donor role is filled by glutamate 204. 3 residues coordinate Mg(2+): aspartate 241, glutamate 284, and aspartate 311. Residues lysine 336, arginine 365, serine 366, and lysine 387 each coordinate (2R)-2-phosphoglycerate. Catalysis depends on lysine 336, which acts as the Proton acceptor.

Belongs to the enolase family. Requires Mg(2+) as cofactor.

The protein resides in the cytoplasm. It is found in the secreted. It localises to the cell surface. The enzyme catalyses (2R)-2-phosphoglycerate = phosphoenolpyruvate + H2O. It functions in the pathway carbohydrate degradation; glycolysis; pyruvate from D-glyceraldehyde 3-phosphate: step 4/5. Functionally, catalyzes the reversible conversion of 2-phosphoglycerate (2-PG) into phosphoenolpyruvate (PEP). It is essential for the degradation of carbohydrates via glycolysis. This chain is Enolase, found in Sinorhizobium fredii (strain NBRC 101917 / NGR234).